A 208-amino-acid chain; its full sequence is MSSEPPPPYPGGPTAPLLEEKSGAPPTPGRSSPAVMQPPPGMPLPPADIGPPPYEPPGHPMPQPGFIPPHMSADGTYMPPGFYPPPGPHPPMGYYPPGPYTPGPYPGPGGHTATVLVPSGAATTVTVLQGEIFEGAPVQTVCPHCQQAITTKISYEIGLMNFVLGFFCCFMGCDLGCCLIPCLINDFKDVTHTCPSCKAYIYTYKRLC.

Pro residues-rich tracts occupy residues 1 to 13 (MSSE…PGGP) and 36 to 67 (MQPP…PGFI). Residues 1–71 (MSSEPPPPYP…PQPGFIPPHM (71 aa)) are disordered. The region spanning 122–206 (ATTVTVLQGE…CKAYIYTYKR (85 aa)) is the LITAF domain. Residues cysteine 142 and cysteine 145 each contribute to the Zn(2+) site. The tract at residues 164 to 184 (LGFFCCFMGCDLGCCLIPCLI) is membrane-binding amphipathic helix. Zn(2+) is bound by residues cysteine 194 and cysteine 197.

The protein belongs to the CDIP1/LITAF family. In terms of tissue distribution, highly expressed in brain. Expressed at lower level in heart, skeletal muscle, kidney, pancreas and liver. Weakly or not expressed in placenta and lung.

It localises to the late endosome membrane. Its subcellular location is the lysosome membrane. In terms of biological role, acts as an important p53/TP53-apoptotic effector. Regulates TNF-alpha-mediated apoptosis in a p53/TP53-dependent manner. In Homo sapiens (Human), this protein is Cell death-inducing p53-target protein 1 (CDIP1).